Consider the following 368-residue polypeptide: RNA polymerase sigma factor SigA (368 aa).

Positions 16–90 are sigma-70 factor domain-1; it reads TLTLEDVKKQ…KLNPSDLSAP (75 aa). The interval 69 to 90 is disordered; the sequence is LVNEKDSSDTDEKLNPSDLSAP. Basic and acidic residues predominate over residues 71 to 83; that stretch reads NEKDSSDTDEKLN. The segment at 135–205 is sigma-70 factor domain-2; the sequence is LAEANLRLVV…TRAIADQART (71 aa). Residues 159–162 carry the Interaction with polymerase core subunit RpoC motif; the sequence is DLIQ. The interval 214-291 is sigma-70 factor domain-3; that stretch reads ETINKLIRVQ…QEAQSPSDHA (78 aa). Residues 303–356 are sigma-70 factor domain-4; it reads VLDTLTDREENVLRLRFGLDDGRTRTLEEVGKVFGVTRERIRQIEAKALRKLRH. Positions 329 to 348 form a DNA-binding region, H-T-H motif; the sequence is LEEVGKVFGVTRERIRQIEA.

Belongs to the sigma-70 factor family. RpoD/SigA subfamily. Interacts transiently with the RNA polymerase catalytic core formed by RpoA, RpoB, RpoC and RpoZ (2 alpha, 1 beta, 1 beta' and 1 omega subunit) to form the RNA polymerase holoenzyme that can initiate transcription. Interacts (via sigma-70 factor domain 4) with the phage G1 protein gp67; this inhibits rRNA synthesis. Interaction with phage G1 protein gp67 does not inhibit transcription in general, but selectively inhibits transcription from promoters that require interaction of the RNA polymerase alpha subunit with DNA sequences upstream of the -35 promoter element.

It is found in the cytoplasm. Its function is as follows. Sigma factors are initiation factors that promote the attachment of RNA polymerase to specific initiation sites and are then released. This sigma factor is the primary sigma factor during exponential growth. This chain is RNA polymerase sigma factor SigA, found in Staphylococcus aureus (strain NCTC 8325 / PS 47).